Here is a 249-residue protein sequence, read N- to C-terminus: uncharacterized protein (249 aa).

2 stretches are compositionally biased toward polar residues: residues 66–79 (NASL…TISP) and 92–119 (ASGS…SSSE). Residues 66–142 (NASLESGQSS…GPTSPRVTPG (77 aa)) are disordered.

It localises to the plastid. The protein localises to the chloroplast. This is an uncharacterized protein from Chlorella vulgaris (Green alga).